A 756-amino-acid polypeptide reads, in one-letter code: Virulence factor MDV010 (756 aa).

An N-terminal signal peptide occupies residues 1–30 (MPSKSIADHHAGYGVALAIVALLLIHGTAL). The disordered stretch occupies residues 96–120 (EEHITLSSPRTSTKTTNENGHEKDS). Over residues 100-113 (TLSSPRTSTKTTNE) the composition is skewed to polar residues. N-linked (GlcNAc...) asparagine; by host glycosylation is found at Asn222, Asn241, Asn287, Asn423, Asn495, Asn542, Asn552, Asn580, Asn660, Asn684, Asn715, and Asn744.

The protein resides in the secreted. May play a role in host immune modulation since the protein is secreted and provides an advantage for growth in vivo while it is completely dispensable in cell culture. The protein is Virulence factor MDV010 (MDV010) of Gallid herpesvirus 2 (strain Chicken/Md5/ATCC VR-987) (GaHV-2).